The following is a 146-amino-acid chain: Putative esterase DR_2321 (146 aa).

It belongs to the thioesterase PaaI family.

This chain is Putative esterase DR_2321, found in Deinococcus radiodurans (strain ATCC 13939 / DSM 20539 / JCM 16871 / CCUG 27074 / LMG 4051 / NBRC 15346 / NCIMB 9279 / VKM B-1422 / R1).